The sequence spans 162 residues: Nucleotide-binding protein SGR_2909 (162 aa).

Belongs to the YajQ family.

In terms of biological role, nucleotide-binding protein. This chain is Nucleotide-binding protein SGR_2909, found in Streptomyces griseus subsp. griseus (strain JCM 4626 / CBS 651.72 / NBRC 13350 / KCC S-0626 / ISP 5235).